We begin with the raw amino-acid sequence, 279 residues long: Urease accessory protein UreD (279 aa).

Belongs to the UreD family. UreD, UreF and UreG form a complex that acts as a GTP-hydrolysis-dependent molecular chaperone, activating the urease apoprotein by helping to assemble the nickel containing metallocenter of UreC. The UreE protein probably delivers the nickel.

It localises to the cytoplasm. In terms of biological role, required for maturation of urease via the functional incorporation of the urease nickel metallocenter. The chain is Urease accessory protein UreD from Brucella suis (strain ATCC 23445 / NCTC 10510).